We begin with the raw amino-acid sequence, 245 residues long: 3-deoxy-manno-octulosonate cytidylyltransferase (245 aa).

The protein belongs to the KdsB family.

It is found in the cytoplasm. The catalysed reaction is 3-deoxy-alpha-D-manno-oct-2-ulosonate + CTP = CMP-3-deoxy-beta-D-manno-octulosonate + diphosphate. It functions in the pathway nucleotide-sugar biosynthesis; CMP-3-deoxy-D-manno-octulosonate biosynthesis; CMP-3-deoxy-D-manno-octulosonate from 3-deoxy-D-manno-octulosonate and CTP: step 1/1. Its pathway is bacterial outer membrane biogenesis; lipopolysaccharide biosynthesis. In terms of biological role, activates KDO (a required 8-carbon sugar) for incorporation into bacterial lipopolysaccharide in Gram-negative bacteria. This Rhodopseudomonas palustris (strain BisB5) protein is 3-deoxy-manno-octulosonate cytidylyltransferase.